A 557-amino-acid polypeptide reads, in one-letter code: Urocanate hydratase (557 aa).

NAD(+)-binding positions include 53–54 (GG), Q131, 177–179 (GMG), D197, R202, 243–244 (NA), 264–268 (QTSAH), 274–275 (YL), and Y323. The active site involves C411. Position 493 (G493) interacts with NAD(+).

It belongs to the urocanase family. Requires NAD(+) as cofactor.

Its subcellular location is the cytoplasm. The catalysed reaction is 4-imidazolone-5-propanoate = trans-urocanate + H2O. The protein operates within amino-acid degradation; L-histidine degradation into L-glutamate; N-formimidoyl-L-glutamate from L-histidine: step 2/3. In terms of biological role, catalyzes the conversion of urocanate to 4-imidazolone-5-propionate. The chain is Urocanate hydratase from Hahella chejuensis (strain KCTC 2396).